Reading from the N-terminus, the 151-residue chain is Transcriptional regulator MraZ (151 aa).

SpoVT-AbrB domains are found at residues 5-52 (ANAI…PLDE) and 81-124 (AVDL…DEDA).

Belongs to the MraZ family. Forms oligomers.

The protein resides in the cytoplasm. Its subcellular location is the nucleoid. This Pseudomonas fluorescens (strain Pf0-1) protein is Transcriptional regulator MraZ.